Here is a 133-residue protein sequence, read N- to C-terminus: MLSPEAERVLRYLVEVEELAEEVLADKRQIVDLDTKRNQNREGLRALQKDLSLSEDVMVCFGNMFIKMPHPETKEMIEKDQDHLDKEIEKLRKQLKVKVNRLFEAQGKPELKGFNLNPLNQDELKALKVILKG.

It belongs to the prefoldin subunit beta family. Component of the PAQosome complex which is responsible for the biogenesis of several protein complexes and which consists of R2TP complex members RUVBL1, RUVBL2, RPAP3 and PIH1D1, URI complex members PFDN2, PFDN6, PDRG1, UXT and URI1 as well as ASDURF, POLR2E and DNAAF10/WDR92. Predominantly expressed in normal testis and exhibits reduced but detectable expression in other organs.

It is found in the cytoplasm. In terms of biological role, may play a role in chaperone-mediated protein folding. The protein is p53 and DNA damage-regulated protein 1 (PDRG1) of Homo sapiens (Human).